Here is a 239-residue protein sequence, read N- to C-terminus: Cysteine-rich venom protein 2 (239 aa).

A signal peptide spans 1–19 (MIALIVLPILAAVLQQSSG). The region spanning 38 to 166 (VDLHNSLRRS…EYSYFYVCQY (129 aa)) is the SCP domain. Disulfide bonds link Cys75–Cys153, Cys92–Cys167, Cys148–Cys164, Cys186–Cys193, Cys189–Cys198, Cys202–Cys234, and Cys219–Cys232. Residues 198–234 (CTNPCPKKISTQLPRFGPQAGCQDKQMQSDCSATCFC) enclose the ShKT domain.

It belongs to the CRISP family. Expressed by the venom gland.

It is found in the secreted. Weakly blocks contraction of smooth muscle elicited by high potassium-induced depolarization, but does not block caffeine-stimulated contraction. May target voltage-gated calcium channels on smooth muscle. In Sistrurus catenatus edwardsii (Desert massasauga), this protein is Cysteine-rich venom protein 2.